Consider the following 479-residue polypeptide: ATP synthase subunit beta (479 aa).

Position 168-175 (168-175 (GGAGVGKT)) interacts with ATP.

Belongs to the ATPase alpha/beta chains family. F-type ATPases have 2 components, CF(1) - the catalytic core - and CF(0) - the membrane proton channel. CF(1) has five subunits: alpha(3), beta(3), gamma(1), delta(1), epsilon(1). CF(0) has three main subunits: a(1), b(2) and c(9-12). The alpha and beta chains form an alternating ring which encloses part of the gamma chain. CF(1) is attached to CF(0) by a central stalk formed by the gamma and epsilon chains, while a peripheral stalk is formed by the delta and b chains.

It is found in the cell membrane. The catalysed reaction is ATP + H2O + 4 H(+)(in) = ADP + phosphate + 5 H(+)(out). Produces ATP from ADP in the presence of a proton gradient across the membrane. The catalytic sites are hosted primarily by the beta subunits. The sequence is that of ATP synthase subunit beta from Frankia casuarinae (strain DSM 45818 / CECT 9043 / HFP020203 / CcI3).